Here is a 266-residue protein sequence, read N- to C-terminus: Beta-lactamase OXA-11 (266 aa).

A signal peptide spans 1–20 (MKTFAAYVIIACLSSTALAG). Residue S67 is the Acyl-ester intermediate of the active site. At K70 the chain carries N6-carboxylysine. 205–207 (KTG) lines the substrate pocket.

Belongs to the class-D beta-lactamase family.

The enzyme catalyses a beta-lactam + H2O = a substituted beta-amino acid. In terms of biological role, hydrolyzes carbenicillin, oxacillin and cephalosporin. Does not hydrolyze cefoxitin or carbapenems. The polypeptide is Beta-lactamase OXA-11 (bla) (Pseudomonas aeruginosa).